The following is a 254-amino-acid chain: Tyrosine-protein phosphatase YwqE (254 aa).

The protein belongs to the metallo-dependent hydrolases superfamily. CpsB/CapC family. Mn(2+) serves as cofactor.

It carries out the reaction O-phospho-L-tyrosyl-[protein] + H2O = L-tyrosyl-[protein] + phosphate. With respect to regulation, inhibited by vanadate and sodium pyrophosphate. Not inhibited by sodium fluoride. Functionally, dephosphorylates the phosphotyrosine-containing proteins YwqD, YwqF and Ssb. The protein is Tyrosine-protein phosphatase YwqE (ywqE) of Bacillus subtilis (strain 168).